A 360-amino-acid chain; its full sequence is MWAPGHHHLCLIFLLTCVFACVFFLLIHQNLFHSGLDLFLPCPDRSRVRSPVAILCLSGTLMNPNATFTCPRHSASVSGTWTIDPKGRFGNQMGQYATLLALAQLNGRQAFIQPSMHAVLAPVFRITLPVLAPEVDRHAPWQELELHDWMSEEYAHLKEPWLKLTGFPCSWTFFHHLRDQIRSEFTLHEHLRQEAQRSLSGLRFPRTGGRPSTFVGVHVRRGDYLQVMPLHWKGVVGDRAYLQQAMDWFRARHKAPIFVVTSNGMKWCRENIDTSRGDVIFAGDGQEGAPNKDFALLTQCNHTIMTIGTFGFWAAYLAGGDTIYLANFTLPDSSFLKIFKPEAAFLPEWVGINADLSPLQ.

Residues 1-8 lie on the Cytoplasmic side of the membrane; the sequence is MWAPGHHH. A helical; Signal-anchor for type II membrane protein transmembrane segment spans residues 9–27; that stretch reads LCLIFLLTCVFACVFFLLI. Over 28-360 the chain is Lumenal; the sequence is HQNLFHSGLD…GINADLSPLQ (333 aa). Residues asparagine 65, asparagine 301, and asparagine 327 are each glycosylated (N-linked (GlcNAc...) asparagine).

The protein belongs to the glycosyltransferase 11 family. In terms of tissue distribution, expressed in brain, intestine and kidney.

It is found in the golgi apparatus. The protein localises to the golgi stack membrane. It catalyses the reaction a ganglioside GM1 + GDP-beta-L-fucose = a ganglioside Fuc-GM1 + GDP + H(+). The catalysed reaction is a beta-D-galactosyl-(1-&gt;4)-N-acetyl-beta-D-glucosaminyl derivative + GDP-beta-L-fucose = an alpha-L-Fuc-(1-&gt;2)-beta-D-Gal-(1-&gt;4)-beta-D-GlcNAc derivative + GDP + H(+). The enzyme catalyses a ganglioside GA1 + GDP-beta-L-fucose = a ganglioside Fuc-GA1 + GDP + H(+). It carries out the reaction a beta-D-Gal-(1-&gt;3)-beta-D-GlcNAc-(1-&gt;3)-beta-D-Gal-(1-&gt;4)-beta-D-Glc-(1&lt;-&gt;1')-Cer(d18:1(4E)) + GDP-beta-L-fucose = alpha-L-fucosyl-(1-&gt;2)- beta-D-galactosyl-(1-&gt;3)-N-acetyl-beta-D-glucosaminyl-(1-&gt;3)-beta-D-galactosyl-(1-&gt;4)-beta-D-glucosyl-(1&lt;-&gt;1')-N-acylsphing-4-enine + GDP + H(+). It catalyses the reaction a neolactoside nLc4Cer(d18:1(4E)) + GDP-beta-L-fucose = a neolactoside IV(2)-alpha-Fuc-nLc4Cer(d18:1(4E)) + GDP + H(+). The catalysed reaction is beta-D-galactosyl-(1-&gt;3)-N-acetyl-D-galactosamine + GDP-beta-L-fucose = alpha-L-fucosyl-(1-&gt;2)-beta-D-galactosyl-(1-&gt;3)-N-acetyl-D-galactosamine + GDP + H(+). It participates in protein modification; protein glycosylation. Catalyzes the transfer of L-fucose, from a guanosine diphosphate-beta-L-fucose, to the terminal galactose residue of glycoconjugates through an alpha(1,2) linkage leading to H antigen synthesis that is an intermediate substrate in the synthesis of ABO blood group antigens. H antigen is essential for maturation of the glomerular layer of the main olfactory bulb, in cell migration and early cell-cell contacts during tumor associated angiogenesis. Preferentially fucosylates soluble lactose and to a lesser extent, fucosylates glycolipids gangliosides GA1 and GM1a. This is Galactoside alpha-(1,2)-fucosyltransferase 1 from Bos taurus (Bovine).